The sequence spans 318 residues: Cytochrome c biogenesis protein CcsA (318 aa).

The next 8 membrane-spanning stretches (helical) occupy residues 17–37 (VLALGLAAFALLLLAIPISFW), 45–65 (SAVVTLLVALANLVLTAQLVL), 75–95 (ISNLYESLCFLAWACTLAQLL), 104–124 (IVSAAATPMALLCVAFASFAL), 149–169 (VIMCSYAALLVGSFLSMAVLF), 224–244 (TITVGFLLLTLGLISGAVWAN), 258–275 (TWALICWMVYAAYLHTRF), and 287–307 (VAVAGIVVIVVCYIGVNLLGI).

Belongs to the CcmF/CycK/Ccl1/NrfE/CcsA family. May interact with ccs1.

It localises to the cellular thylakoid membrane. Functionally, required during biogenesis of c-type cytochromes (cytochrome c6 and cytochrome f) at the step of heme attachment. The polypeptide is Cytochrome c biogenesis protein CcsA (Prochlorococcus marinus (strain MIT 9303)).